Consider the following 557-residue polypeptide: 2-isopropylmalate synthase (557 aa).

The Pyruvate carboxyltransferase domain occupies 33-307 (PIWCSSDLRD…DPQLDFSDID (275 aa)). Mg(2+) is bound by residues aspartate 42, histidine 246, histidine 248, and asparagine 282. The segment at 439 to 557 (ANSPYALVSH…SLSQQEAKAA (119 aa)) is regulatory domain.

This sequence belongs to the alpha-IPM synthase/homocitrate synthase family. LeuA type 2 subfamily. Homodimer. The cofactor is Mg(2+).

The protein localises to the cytoplasm. The catalysed reaction is 3-methyl-2-oxobutanoate + acetyl-CoA + H2O = (2S)-2-isopropylmalate + CoA + H(+). It functions in the pathway amino-acid biosynthesis; L-leucine biosynthesis; L-leucine from 3-methyl-2-oxobutanoate: step 1/4. Functionally, catalyzes the condensation of the acetyl group of acetyl-CoA with 3-methyl-2-oxobutanoate (2-ketoisovalerate) to form 3-carboxy-3-hydroxy-4-methylpentanoate (2-isopropylmalate). This chain is 2-isopropylmalate synthase, found in Pseudomonas putida (strain W619).